The primary structure comprises 178 residues: NADH-quinone oxidoreductase subunit B (178 aa).

Positions 45, 46, 111, and 140 each coordinate [4Fe-4S] cluster.

Belongs to the complex I 20 kDa subunit family. NDH-1 is composed of 15 different subunits. Subunits NuoB, C, D, E, F, and G constitute the peripheral sector of the complex. [4Fe-4S] cluster serves as cofactor.

The protein localises to the cell membrane. It catalyses the reaction a quinone + NADH + 5 H(+)(in) = a quinol + NAD(+) + 4 H(+)(out). In terms of biological role, NDH-1 shuttles electrons from NADH, via FMN and iron-sulfur (Fe-S) centers, to quinones in the respiratory chain. The immediate electron acceptor for the enzyme in this species is believed to be a menaquinone. Couples the redox reaction to proton translocation (for every two electrons transferred, four hydrogen ions are translocated across the cytoplasmic membrane), and thus conserves the redox energy in a proton gradient. The protein is NADH-quinone oxidoreductase subunit B of Deinococcus deserti (strain DSM 17065 / CIP 109153 / LMG 22923 / VCD115).